We begin with the raw amino-acid sequence, 342 residues long: Dihydroorotate dehydrogenase (quinone) (342 aa).

FMN-binding positions include 60-64 (AGLDK) and threonine 84. A substrate-binding site is contributed by lysine 64. 109-113 (NRMGF) contacts substrate. FMN contacts are provided by asparagine 137 and asparagine 170. Asparagine 170 is a substrate binding site. The active-site Nucleophile is serine 173. Asparagine 175 lines the substrate pocket. Residues lysine 215 and threonine 243 each coordinate FMN. 244-245 (NT) is a substrate binding site. FMN is bound by residues glycine 266, glycine 295, and 316-317 (YS).

Belongs to the dihydroorotate dehydrogenase family. Type 2 subfamily. As to quaternary structure, monomer. It depends on FMN as a cofactor.

Its subcellular location is the cell membrane. The catalysed reaction is (S)-dihydroorotate + a quinone = orotate + a quinol. It functions in the pathway pyrimidine metabolism; UMP biosynthesis via de novo pathway; orotate from (S)-dihydroorotate (quinone route): step 1/1. Its function is as follows. Catalyzes the conversion of dihydroorotate to orotate with quinone as electron acceptor. The sequence is that of Dihydroorotate dehydrogenase (quinone) from Nitrosomonas europaea (strain ATCC 19718 / CIP 103999 / KCTC 2705 / NBRC 14298).